The chain runs to 60 residues: Large ribosomal subunit protein bL32 (60 aa).

The protein belongs to the bacterial ribosomal protein bL32 family.

This chain is Large ribosomal subunit protein bL32, found in Streptococcus equi subsp. zooepidemicus (strain MGCS10565).